The sequence spans 328 residues: MADGDSGSERGGSSGGPSGFSQHMSREQETQELASKRLDIQNKRFYLDVKQNAKGRFIKIAEVGAGGSKSRLTLSMAVAAEFRDYLGDFIEHYAQLGPSSPEQIAQASGEDGAGGPGGPRRALKSEFLVRENRKYYLDLKENQRGRFLRIRQTINRGPGFSGGTGGGPGLQSGQTIALPAQGLIEFRDALAKLIDDYGGEDDEGMGLGSGASGGGAGGGGMYGELPEGTSITVDSKRFFFDVGSNKYGVFLRVSEVKPSYRNSITVPLKAWGKFGGAFCRYSEEMKEIQERQRDKMYDRRGPGERGGSLGPGAGGGGDDSETEDVDDD.

Disordered stretches follow at residues 1-35, 100-124, and 289-328; these read MADG…ELAS, SPEQ…RALK, and QERQ…VDDD. Alanine 2 carries the N-acetylalanine modification. Over residues 9-18 the composition is skewed to gly residues; sequence ERGGSSGGPS. The span at 24–35 shows a compositional bias: basic and acidic residues; that stretch reads MSREQETQELAS. Positions 27 to 260 are DNA-binding; that stretch reads EQETQELASK…LRVSEVKPSY (234 aa). The segment covering 289-303 has biased composition (basic and acidic residues); sequence QERQRDKMYDRRGPG. Gly residues predominate over residues 304–317; that stretch reads ERGGSLGPGAGGGG. Acidic residues predominate over residues 318 to 328; that stretch reads DDSETEDVDDD.

This sequence belongs to the PUR DNA-binding protein family.

It localises to the nucleus. Transcriptional regulator which can act as an activator or a repressor. The protein is Transcriptional regulator protein Pur-beta-B (purb-b) of Xenopus laevis (African clawed frog).